Here is a 354-residue protein sequence, read N- to C-terminus: Trans-enoyl reductase pydC (354 aa).

Positions 16–342 (ANTDPVTFEI…RREVSGEKIV (327 aa)) constitute an Enoyl reductase (ER) domain. NADP(+) is bound by residues 51–54 (CDYK), 180–183 (SPKN), tyrosine 198, 245–246 (FE), and 336–337 (VS).

Belongs to the zinc-containing alcohol dehydrogenase family. Monomer.

The protein operates within mycotoxin biosynthesis. Its function is as follows. Trans-enoyl reductase; part of the gene cluster that mediates the biosynthesis of pyrrocidines, fungal natural products containing a macrocyclic para-cyclophane connected to a decahydrofluorene ring system that show potent antibiotic activities toward Gram-negative bacteria. Within the pathway, the PKS-NRPS pydA, with the help of the trans-enoyl reductase pydC, synthesize the polyketide-tyrosyl acyl thioester product which can be reductively off-loaded by the terminal reductase (R) domain in pydA. The PKS module of pydA acts in combination with the trans-acting enoyl reductase pydC to produce a methylated polyketide attached to the ACP domain. In parallel, the adenylation (A) domain of the NRPS module activated L-tyrosine, which is then transferred to the ACP domain. The condensation (C) domain subsequently link this group to the polyketide chain, forming an enzyme-bound amide. The alpha/beta hydrolase pydG is then required to catalyze the subsequent Knoevenagel condensation that affords the 3-pyrrolin-2-one ring, whereas the four proteins pydB, pydE, pydX and pydZ then function synergistically to form the cyclophane. PydB and the membrane-bound pydX and pydZ are lipid-binding proteins that can sequester and mold the pdyG product into the inverse S-shape. Binding of the medium chain reductase pydE to the complex would trigger the cascade oxidative cyclization. PydY is involved in the Diels-Alder cycloaddition that forms the decahydrofluorene core. Additional non-enzymatic hydroxylation yields pyrrocidine A2 which can be further reduced into pyrrocidine B by an endogenous reductase. This is Trans-enoyl reductase pydC from Acremonium sp.